A 279-amino-acid polypeptide reads, in one-letter code: Nitrate import permease protein NrtB (279 aa).

Positions 86 to 270 (IAASLQRVAV…LLNALVGFIA (185 aa)) constitute an ABC transmembrane type-1 domain. Helical transmembrane passes span 98 to 118 (LMAA…VLMF), 124 to 144 (IFQV…LAAF), 151 to 171 (AIFV…AVGV), 196 to 216 (VLLP…IGLS), 217 to 237 (WLAI…FFIW), and 249 to 269 (ILAI…VGFI).

This sequence belongs to the binding-protein-dependent transport system permease family. CysTW subfamily. As to quaternary structure, the complex is composed of two ATP-binding proteins (NrtC and NrtD), two transmembrane proteins (NrtB) and a solute-binding protein (NrtA).

It is found in the cell inner membrane. Its function is as follows. Part of the ABC transporter complex NrtABCD involved in nitrate uptake. The complex is probably also involved in nitrite transport. Probably responsible for the translocation of the substrate across the membrane. This Leptolyngbya laminosa (Phormidium laminosum) protein is Nitrate import permease protein NrtB.